Consider the following 437-residue polypeptide: MTHYHFVGIKGSGMSSLAQIMHDLGHEVQGSDIENYVFTEVALRNKGIKILPFDANNIKEDMVVIQGNAFASSHEEIVRAHQLKLDVVSYNDFLGQIIDQYTSVAVTGAHGKTSTTGLLSHVMNGDKKTSFLIGDGTGMGLPESDYFAFEACEYRRHFLSYKPDYAIMTNIDFDHPDYFKDINDVFDAFQEMAHNVKKGIIAWGDDEHLRKIEADVPIYYYGFKESDDIYAQNIQITDKGTAFDVYVDGEFYDHFLSPQYGDHTVLNALAVIAISYLEKLDVTNIKEALETFGGVKRRFNETTIANQVIVDDYAHHPREISATIETARKKYPHKEVVAVFQPHTFSRTQAFLNEFAESLSKADRVFLCEIFGSIRENTGALTIQDLIDKIEGASLINEDSINVLEQFDNAVILFMGAGDIQKLQNAYLDKLGMKNAF.

Residue G108–S114 coordinates ATP.

It belongs to the MurCDEF family.

The protein localises to the cytoplasm. The catalysed reaction is UDP-N-acetyl-alpha-D-muramate + L-alanine + ATP = UDP-N-acetyl-alpha-D-muramoyl-L-alanine + ADP + phosphate + H(+). The protein operates within cell wall biogenesis; peptidoglycan biosynthesis. Its function is as follows. Cell wall formation. The sequence is that of UDP-N-acetylmuramate--L-alanine ligase from Staphylococcus aureus (strain MRSA252).